The chain runs to 195 residues: HTH-type transcriptional regulator BetI (195 aa).

The HTH tetR-type domain maps to 8–68 (SIRRRQLIDA…ATMRDITSQL (61 aa)). The segment at residues 31 to 50 (TIAQIARRAGVSTGIISHYF) is a DNA-binding region (H-T-H motif).

The protein operates within amine and polyamine biosynthesis; betaine biosynthesis via choline pathway [regulation]. Functionally, repressor involved in the biosynthesis of the osmoprotectant glycine betaine. It represses transcription of the choline transporter BetT and the genes of BetAB involved in the synthesis of glycine betaine. In Escherichia coli O127:H6 (strain E2348/69 / EPEC), this protein is HTH-type transcriptional regulator BetI.